The chain runs to 1011 residues: DNA-directed RNA polymerase subunit beta'' (1011 aa).

Zn(2+) contacts are provided by Cys216, Cys282, Cys288, and Cys291.

The protein belongs to the RNA polymerase beta' chain family. RpoC2 subfamily. In terms of assembly, in plastids the minimal PEP RNA polymerase catalytic core is composed of four subunits: alpha, beta, beta', and beta''. When a (nuclear-encoded) sigma factor is associated with the core the holoenzyme is formed, which can initiate transcription. Zn(2+) serves as cofactor.

Its subcellular location is the plastid. The protein localises to the chloroplast. The enzyme catalyses RNA(n) + a ribonucleoside 5'-triphosphate = RNA(n+1) + diphosphate. DNA-dependent RNA polymerase catalyzes the transcription of DNA into RNA using the four ribonucleoside triphosphates as substrates. The sequence is that of DNA-directed RNA polymerase subunit beta'' from Ostreococcus tauri.